The primary structure comprises 926 residues: MVDRLKLLQAISTSAKDLASFALSRGASPIPQPVGLTDVTFDPLPLPDLNALHRRLKDAGLPPKTTKSAIKAYDEACSRWRSTVDESFKATASAVSPRNLHLLLSLRHHVYAQQVQKWLWQVLQVPELWKAEMAKQRAHITATMDTYKKPRPKFHSEYTPLLELYFHFNAYPTFADRRMLAEKTGMQTRQITVWFQNHRRRAKGPLPRMAPTDKIPMEEFERQRENMARKLLPVLLPSHLRPAPSGSENASPARSIPRATMSAAKSKKPDGDKEALRKVGKKALRDAAKTAKANSSTVLGALVAAGVQQAPEAKNSKKAKKAARKNAQDVEMRDATKSHEKRRKTKAMPRPAGQVPMDVDGRAHKKSTKTTSSAFDSKAELAFARMAYPAPSPYAWVHTAPKSSHVMPSAPFKDAHISDIRKLGKGKPSQNLTSTPATFSTVPPRRTSSRLNAMRPPYAFPATYDSASVPMTFAAAQTLRFSFVTDSQAFGFRQRYPLSVGEKVHSGAIDALTRRFESLRVLCAEFSTPKKQTSSFERQTLCRLRAEGLKAGEIEVRHLVAADSYAARRAITYVTPRAPLDSVVVDLPRALQLRLVKPLVPAEPIVRPDDFAPFVALAEKRAKRRARKEKKKQAEKEARKEEKRARKEAKQAKKDRKEQRAGLPRRSPSTLDSSRASSVTSDASATSRKSRTSRKPRDSSASSVASARTPSLSSTSSRRSSGTSMPATPRMNESLPVVASDNFVLGTDKDVTMTPELMAQLFGEDDASGLDEPMQSEGFSPDMLIFSSCNDGALGDMTADVNMPELGDLSDTQLSFDDMNWTSSMDLSTQPAASFDSSSETSSMDFNWLLPQCANTAPDWSALIGMTPSTTSQIHVLGGTYSCELGGTNTTNAPLNFADLSFELDAGEDCFINFDHNPLGGTMLAV.

The segment at residues 147 to 206 (YKKPRPKFHSEYTPLLELYFHFNAYPTFADRRMLAEKTGMQTRQITVWFQNHRRRAKGPL) is a DNA-binding region (homeobox). Disordered stretches follow at residues 238–281 (SHLR…KVGK), 308–374 (QQAP…TSSA), 424–452 (GKGK…SRLN), and 625–734 (RARK…MNES). 2 stretches are compositionally biased toward basic and acidic residues: residues 267 to 281 (KKPD…KVGK) and 326 to 338 (NAQD…ATKS). Residues 428-441 (PSQNLTSTPATFST) show a composition bias toward polar residues. The span at 632-660 (KQAEKEARKEEKRARKEAKQAKKDRKEQR) shows a compositional bias: basic and acidic residues. Low complexity-rich tracts occupy residues 669-687 (STLD…SATS) and 699-724 (SSAS…SGTS).

It is found in the nucleus. In terms of biological role, specifies A-alpha-3 mating-type. May regulate the expression of genes specific to the homokaryotic cell type. This is Mating-type protein A-alpha Y3 from Schizophyllum commune (Split gill fungus).